A 510-amino-acid polypeptide reads, in one-letter code: Pyruvate kinase, cytosolic isozyme (510 aa).

Position 50 (Arg-50) interacts with substrate. Residues Asn-52, Ser-54, Asp-84, and Thr-85 each contribute to the K(+) site. ATP is bound at residue 52–55 (NFSH). ATP is bound by residues Arg-91 and Lys-176. Glu-242 is a Mg(2+) binding site. Gly-265, Asp-266, and Thr-298 together coordinate substrate. Mg(2+) is bound at residue Asp-266.

The protein belongs to the pyruvate kinase family. In terms of assembly, homotetramer. The cofactor is Mg(2+). It depends on K(+) as a cofactor.

It is found in the cytoplasm. The catalysed reaction is pyruvate + ATP = phosphoenolpyruvate + ADP + H(+). The protein operates within carbohydrate degradation; glycolysis; pyruvate from D-glyceraldehyde 3-phosphate: step 5/5. The protein is Pyruvate kinase, cytosolic isozyme of Solanum tuberosum (Potato).